Here is a 351-residue protein sequence, read N- to C-terminus: uncharacterized protein (351 aa).

Residues K25–V67 are disordered. The span at P33–K55 shows a compositional bias: low complexity.

This is an uncharacterized protein from Escherichia coli (strain K12).